We begin with the raw amino-acid sequence, 122 residues long: Large ribosomal subunit protein uL14c (122 aa).

It belongs to the universal ribosomal protein uL14 family. Part of the 50S ribosomal subunit.

It is found in the plastid. Its function is as follows. Binds to 23S rRNA. The polypeptide is Large ribosomal subunit protein uL14c (Cuscuta exaltata (Tall dodder)).